The following is an 806-amino-acid chain: Integrin beta-7 (806 aa).

The first 19 residues, M1–S19, serve as a signal peptide directing secretion. Residues E20–R724 are Extracellular-facing. Residues S44–P92 enclose the PSI domain. Cystine bridges form between C51-C476, C54-C80, C64-C91, C216-C223, C271-C311, C412-C428, C448-C474, C478-C497, C488-C500, C502-C511, C513-C545, C527-C543, C537-C548, C550-C559, C561-C582, C566-C580, C574-C585, C587-C596, C598-C621, C605-C619, C613-C624, C626-C635, C638-C641, C645-C688, C651-C670, and C654-C666. N68 is a glycosylation site (N-linked (GlcNAc...) asparagine). Basic and acidic residues predominate over residues E98–Q107. The tract at residues E98–L123 is disordered. The VWFA domain maps to Y150–L389. Mg(2+) contacts are provided by S161 and S163. Residues S163, D166, D167, and D198 each coordinate Ca(2+). The N-linked (GlcNAc...) asparagine glycan is linked to N250. Positions 254, 256, 258, and 259 each coordinate Ca(2+). E259 lines the Mg(2+) pocket. N279 carries an N-linked (GlcNAc...) asparagine glycan. Ca(2+) contacts are provided by D289 and E373. N434 carries N-linked (GlcNAc...) asparagine glycosylation. I-EGF domains follow at residues C478–E512, C513–E560, C561–E597, and C598–D636. N531 is a glycosylation site (N-linked (GlcNAc...) asparagine). N-linked (GlcNAc...) asparagine glycosylation is present at N590. N-linked (GlcNAc...) asparagine glycosylation is found at N665 and N674. A helical transmembrane segment spans residues A725–Y745. Over R746–D806 the chain is Cytoplasmic. Residues N786–D806 form a disordered region.

This sequence belongs to the integrin beta chain family. Heterodimer of an alpha and a beta subunit. ITGB7/beta-7 associates with either ITGA4/alpha-4 or ITGAE/alpha-E. Integrin ITGA4/ITGB7 interacts with MADCAM1. Integrin ITGA4/ITGB7 interacts with VCAM1 and fibronectin. Interacts with FLNA (via filamin repeats 4, 9, 12, 17, 19, 21, and 23).

It localises to the cell membrane. Integrin ITGA4/ITGB7 (alpha-4/beta-7) (Peyer patches-specific homing receptor LPAM-1) is an adhesion molecule that mediates lymphocyte migration and homing to gut-associated lymphoid tissue (GALT). Integrin ITGA4/ITGB7 interacts with the cell surface adhesion molecules MADCAM1 which is normally expressed by the vascular endothelium of the gastrointestinal tract. Also interacts with VCAM1 and fibronectin, an extracellular matrix component. It recognizes one or more domains within the alternatively spliced CS-1 region of fibronectin. Interactions involve the tripeptide L-D-T in MADCAM1, and L-D-V in fibronectin. Integrin ITGAE/ITGB7 (alpha-E/beta-7, HML-1) is a receptor for E-cadherin. This is Integrin beta-7 (Itgb7) from Mus musculus (Mouse).